The chain runs to 397 residues: Succinyl-diaminopimelate desuccinylase (397 aa).

H73 provides a ligand contact to Zn(2+). D75 is a catalytic residue. D106 contributes to the Zn(2+) binding site. E140 serves as the catalytic Proton acceptor. Zn(2+)-binding residues include E141, E169, and H366.

Belongs to the peptidase M20A family. DapE subfamily. As to quaternary structure, homodimer. Requires Zn(2+) as cofactor. Co(2+) is required as a cofactor.

The catalysed reaction is N-succinyl-(2S,6S)-2,6-diaminopimelate + H2O = (2S,6S)-2,6-diaminopimelate + succinate. Its pathway is amino-acid biosynthesis; L-lysine biosynthesis via DAP pathway; LL-2,6-diaminopimelate from (S)-tetrahydrodipicolinate (succinylase route): step 3/3. Its function is as follows. Catalyzes the hydrolysis of N-succinyl-L,L-diaminopimelic acid (SDAP), forming succinate and LL-2,6-diaminopimelate (DAP), an intermediate involved in the bacterial biosynthesis of lysine and meso-diaminopimelic acid, an essential component of bacterial cell walls. The sequence is that of Succinyl-diaminopimelate desuccinylase from Sinorhizobium medicae (strain WSM419) (Ensifer medicae).